A 303-amino-acid polypeptide reads, in one-letter code: Nitrogenase iron protein (303 aa).

Residue 11-18 (GKGGIGKS) participates in ATP binding. Cys112 is a [4Fe-4S] cluster binding site. Arg115 is modified (ADP-ribosylarginine; by dinitrogenase reductase ADP-ribosyltransferase). Cys147 provides a ligand contact to [4Fe-4S] cluster.

The protein belongs to the NifH/BchL/ChlL family. In terms of assembly, homodimer. Requires [4Fe-4S] cluster as cofactor. Post-translationally, the reversible ADP-ribosylation of Arg-115 inactivates the nitrogenase reductase and regulates nitrogenase activity.

It carries out the reaction N2 + 8 reduced [2Fe-2S]-[ferredoxin] + 16 ATP + 16 H2O = H2 + 8 oxidized [2Fe-2S]-[ferredoxin] + 2 NH4(+) + 16 ADP + 16 phosphate + 6 H(+). The key enzymatic reactions in nitrogen fixation are catalyzed by the nitrogenase complex, which has 2 components: the iron protein and the molybdenum-iron protein. The polypeptide is Nitrogenase iron protein (Wolinella succinogenes (strain ATCC 29543 / DSM 1740 / CCUG 13145 / JCM 31913 / LMG 7466 / NCTC 11488 / FDC 602W) (Vibrio succinogenes)).